A 332-amino-acid polypeptide reads, in one-letter code: Formamidase (332 aa).

Residues 14–259 enclose the CN hydrolase domain; the sequence is FLAALIQYPV…WEIVTAEVYP (246 aa). Catalysis depends on E60, which acts as the Proton acceptor. K132 (proton donor) is an active-site residue. C165 functions as the Nucleophile in the catalytic mechanism.

The protein belongs to the carbon-nitrogen hydrolase superfamily. Aliphatic amidase family.

The enzyme catalyses formamide + H2O = formate + NH4(+). Is an aliphatic amidase with a restricted substrate specificity, as it only hydrolyzes formamide. In Bacillus cereus (strain Q1), this protein is Formamidase.